A 409-amino-acid chain; its full sequence is Arginine biosynthesis bifunctional protein ArgJ (409 aa).

The substrate site is built by T156, K182, T193, E280, N404, and S409. T193 acts as the Nucleophile in catalysis.

This sequence belongs to the ArgJ family. Heterotetramer of two alpha and two beta chains.

The protein resides in the cytoplasm. It carries out the reaction N(2)-acetyl-L-ornithine + L-glutamate = N-acetyl-L-glutamate + L-ornithine. The enzyme catalyses L-glutamate + acetyl-CoA = N-acetyl-L-glutamate + CoA + H(+). It participates in amino-acid biosynthesis; L-arginine biosynthesis; L-ornithine and N-acetyl-L-glutamate from L-glutamate and N(2)-acetyl-L-ornithine (cyclic): step 1/1. The protein operates within amino-acid biosynthesis; L-arginine biosynthesis; N(2)-acetyl-L-ornithine from L-glutamate: step 1/4. Its function is as follows. Catalyzes two activities which are involved in the cyclic version of arginine biosynthesis: the synthesis of N-acetylglutamate from glutamate and acetyl-CoA as the acetyl donor, and of ornithine by transacetylation between N(2)-acetylornithine and glutamate. This Ralstonia nicotianae (strain ATCC BAA-1114 / GMI1000) (Ralstonia solanacearum) protein is Arginine biosynthesis bifunctional protein ArgJ.